Consider the following 482-residue polypeptide: Retrovirus-related Pol polyprotein from type-1 retrotransposable element R2 (482 aa).

Residues 1 to 84 (AYADDLILFA…DYFKYLGSRY (84 aa)) form the Reverse transcriptase domain. Residues 208 to 482 (QIPAVEKFYQ…ATGGRGRGDI (275 aa)) form a nucleic acid-binding endonuclease region.

It carries out the reaction DNA(n) + a 2'-deoxyribonucleoside 5'-triphosphate = DNA(n+1) + diphosphate. The polypeptide is Retrovirus-related Pol polyprotein from type-1 retrotransposable element R2 (Popillia japonica (Japanese beetle)).